We begin with the raw amino-acid sequence, 352 residues long: Quinolinate synthase (352 aa).

Residues histidine 55 and serine 72 each contribute to the iminosuccinate site. Cysteine 117 provides a ligand contact to [4Fe-4S] cluster. Residues 143–145 and serine 160 contribute to the iminosuccinate site; that span reads YVN. Cysteine 204 serves as a coordination point for [4Fe-4S] cluster. Residues 230 to 232 and threonine 258 contribute to the iminosuccinate site; that span reads HPE. Cysteine 303 lines the [4Fe-4S] cluster pocket.

The protein belongs to the quinolinate synthase family. Type 2 subfamily. [4Fe-4S] cluster serves as cofactor.

It is found in the cytoplasm. It catalyses the reaction iminosuccinate + dihydroxyacetone phosphate = quinolinate + phosphate + 2 H2O + H(+). It participates in cofactor biosynthesis; NAD(+) biosynthesis; quinolinate from iminoaspartate: step 1/1. In terms of biological role, catalyzes the condensation of iminoaspartate with dihydroxyacetone phosphate to form quinolinate. This Mycobacterium leprae (strain Br4923) protein is Quinolinate synthase.